Reading from the N-terminus, the 306-residue chain is Acetyl-coenzyme A carboxylase carboxyl transferase subunit beta (306 aa).

The region spanning L27–P296 is the CoA carboxyltransferase N-terminal domain. 4 residues coordinate Zn(2+): C31, C34, C50, and C53. The C4-type zinc-finger motif lies at C31–C53.

The protein belongs to the AccD/PCCB family. Acetyl-CoA carboxylase is a heterohexamer composed of biotin carboxyl carrier protein (AccB), biotin carboxylase (AccC) and two subunits each of ACCase subunit alpha (AccA) and ACCase subunit beta (AccD). Zn(2+) serves as cofactor.

Its subcellular location is the cytoplasm. The catalysed reaction is N(6)-carboxybiotinyl-L-lysyl-[protein] + acetyl-CoA = N(6)-biotinyl-L-lysyl-[protein] + malonyl-CoA. The protein operates within lipid metabolism; malonyl-CoA biosynthesis; malonyl-CoA from acetyl-CoA: step 1/1. Its function is as follows. Component of the acetyl coenzyme A carboxylase (ACC) complex. Biotin carboxylase (BC) catalyzes the carboxylation of biotin on its carrier protein (BCCP) and then the CO(2) group is transferred by the transcarboxylase to acetyl-CoA to form malonyl-CoA. The chain is Acetyl-coenzyme A carboxylase carboxyl transferase subunit beta from Pseudomonas syringae pv. syringae (strain B728a).